A 184-amino-acid polypeptide reads, in one-letter code: Ribosome-recycling factor (184 aa).

Belongs to the RRF family.

It localises to the cytoplasm. Its function is as follows. Responsible for the release of ribosomes from messenger RNA at the termination of protein biosynthesis. May increase the efficiency of translation by recycling ribosomes from one round of translation to another. This chain is Ribosome-recycling factor, found in Acinetobacter baumannii (strain SDF).